The primary structure comprises 249 residues: Triosephosphate isomerase (249 aa).

Residues Asn-12 and Lys-14 each contribute to the substrate site. The residue at position 14 (Lys-14) is an N6-acetyllysine. Position 68 is a 3'-nitrotyrosine (Tyr-68). Ser-80 bears the Phosphoserine mark. The active-site Electrophile is the His-96. A Phosphoserine modification is found at Ser-106. Lys-142 participates in a covalent cross-link: Glycyl lysine isopeptide (Lys-Gly) (interchain with G-Cter in SUMO1). Lys-149 carries the post-translational modification N6-succinyllysine. Lys-156 carries the post-translational modification N6-acetyllysine; alternate. Lys-156 carries the N6-succinyllysine; alternate modification. At Ser-159 the chain carries Phosphoserine. Residue Glu-166 is the Proton acceptor of the active site. At Thr-173 the chain carries Phosphothreonine. Position 194 is an N6-acetyllysine; alternate (Lys-194). Lys-194 is modified (N6-succinyllysine; alternate). Lys-194 carries the post-translational modification N6-methyllysine; alternate. Phosphoserine is present on Ser-198. Tyr-209 carries the post-translational modification 3'-nitrotyrosine. Position 212 is a phosphoserine (Ser-212). Thr-214 bears the Phosphothreonine mark. The residue at position 223 (Ser-223) is a Phosphoserine. At Lys-238 the chain carries N6-acetyllysine.

This sequence belongs to the triosephosphate isomerase family. Homodimer.

Its subcellular location is the cytoplasm. It carries out the reaction dihydroxyacetone phosphate = methylglyoxal + phosphate. The enzyme catalyses D-glyceraldehyde 3-phosphate = dihydroxyacetone phosphate. It functions in the pathway carbohydrate degradation; glycolysis; D-glyceraldehyde 3-phosphate from glycerone phosphate: step 1/1. Its pathway is carbohydrate biosynthesis; gluconeogenesis. Functionally, triosephosphate isomerase is an extremely efficient metabolic enzyme that catalyzes the interconversion between dihydroxyacetone phosphate (DHAP) and D-glyceraldehyde-3-phosphate (G3P) in glycolysis and gluconeogenesis. Its function is as follows. It is also responsible for the non-negligible production of methylglyoxal a reactive cytotoxic side-product that modifies and can alter proteins, DNA and lipids. The sequence is that of Triosephosphate isomerase (TPI1) from Macaca fascicularis (Crab-eating macaque).